We begin with the raw amino-acid sequence, 211 residues long: Thymidylate kinase (211 aa).

Residue 10-17 (GLDGSGKT) participates in ATP binding.

The protein belongs to the thymidylate kinase family.

It carries out the reaction dTMP + ATP = dTDP + ADP. In terms of biological role, phosphorylation of dTMP to form dTDP in both de novo and salvage pathways of dTTP synthesis. The protein is Thymidylate kinase of Blochmanniella floridana.